The primary structure comprises 101 residues: A-type ATP synthase subunit F (101 aa).

Belongs to the V-ATPase F subunit family. Has multiple subunits with at least A(3), B(3), C, D, E, F, H, I and proteolipid K(x).

It is found in the cell membrane. Its function is as follows. Component of the A-type ATP synthase that produces ATP from ADP in the presence of a proton gradient across the membrane. In Methanosarcina acetivorans (strain ATCC 35395 / DSM 2834 / JCM 12185 / C2A), this protein is A-type ATP synthase subunit F.